Here is a 156-residue protein sequence, read N- to C-terminus: Putative pre-16S rRNA nuclease (156 aa).

It belongs to the YqgF nuclease family.

The protein localises to the cytoplasm. In terms of biological role, could be a nuclease involved in processing of the 5'-end of pre-16S rRNA. This is Putative pre-16S rRNA nuclease from Ehrlichia chaffeensis (strain ATCC CRL-10679 / Arkansas).